The following is a 105-amino-acid chain: Replication restart protein PriB (105 aa).

One can recognise an SSB domain in the interval 1–102; sequence MTTNRLVLSG…LHAEQIEFID (102 aa).

The protein belongs to the PriB family. As to quaternary structure, homodimer. Interacts with PriA and DnaT. Component of the replication restart primosome. Primosome assembly occurs via a 'hand-off' mechanism. PriA binds to replication forks, subsequently PriB then DnaT bind; DnaT then displaces ssDNA to generate the helicase loading substrate.

In terms of biological role, involved in the restart of stalled replication forks, which reloads the replicative helicase on sites other than the origin of replication; the PriA-PriB pathway is the major replication restart pathway. During primosome assembly it facilitates complex formation between PriA and DnaT on DNA; stabilizes PriA on DNA. Stimulates the DNA unwinding activity of PriA helicase. This chain is Replication restart protein PriB, found in Yersinia pseudotuberculosis serotype O:1b (strain IP 31758).